The sequence spans 93 residues: Small ribosomal subunit protein uS19 (93 aa).

This sequence belongs to the universal ribosomal protein uS19 family.

Its function is as follows. Protein S19 forms a complex with S13 that binds strongly to the 16S ribosomal RNA. The protein is Small ribosomal subunit protein uS19 of Saccharopolyspora erythraea (strain ATCC 11635 / DSM 40517 / JCM 4748 / NBRC 13426 / NCIMB 8594 / NRRL 2338).